The following is a 380-amino-acid chain: DNA replication and repair protein RecF (380 aa).

Residue 30–37 participates in ATP binding; the sequence is GNNAQGKS.

Belongs to the RecF family.

The protein resides in the cytoplasm. Functionally, the RecF protein is involved in DNA metabolism; it is required for DNA replication and normal SOS inducibility. RecF binds preferentially to single-stranded, linear DNA. It also seems to bind ATP. In Crocosphaera subtropica (strain ATCC 51142 / BH68) (Cyanothece sp. (strain ATCC 51142)), this protein is DNA replication and repair protein RecF.